The following is a 142-amino-acid chain: Neuritin (142 aa).

Residues 1-27 (MGLTLSGRYISLFLAVQIAYLLQAVRA) form the signal peptide. Residue Ala112 is the site of GPI-anchor amidated alanine attachment. Residues 113–142 (GGNGAIRSSVPFGVTLLITALSALVTWMQF) constitute a propeptide, removed in mature form.

It belongs to the neuritin family.

It localises to the cell membrane. Its subcellular location is the synapse. Modulates postsynaptic dendritic arbor elaboration and synaptic maturation. The sequence is that of Neuritin (nrn1) from Danio rerio (Zebrafish).